We begin with the raw amino-acid sequence, 256 residues long: Surfeit locus protein 2 (256 aa).

The disordered stretch occupies residues 133–256 (RRREDQMDGD…KSFSSCKQPG (124 aa)). Basic and acidic residues predominate over residues 135–150 (REDQMDGDGPRPREAF). The segment covering 156 to 165 (SDEGGAASDD) has biased composition (low complexity). Residues 183–193 (STEDGDGTDDF) are compositionally biased toward acidic residues. A phosphothreonine mark is found at threonine 190 and threonine 195. The span at 194–218 (LTDKEDEKAKPPREKATDEGRRETT) shows a compositional bias: basic and acidic residues. Basic residues predominate over residues 224–247 (VQKRGKKQLGSLKKKFKSHHRKPK).

This sequence belongs to the SURF2 family.

The sequence is that of Surfeit locus protein 2 (SURF2) from Homo sapiens (Human).